The primary structure comprises 259 residues: Bacillaene synthase dehydratase PksH (259 aa).

Catalysis depends on residues Asp68 and Glu137.

Belongs to the enoyl-CoA hydratase/isomerase family.

The protein resides in the cytoplasm. The protein operates within antibiotic biosynthesis; bacillaene biosynthesis. In terms of biological role, involved in some intermediate steps for the synthesis of the antibiotic polyketide bacillaene which is involved in secondary metabolism. Catalyzes the dehydration of the (S)-3-hydroxy-3-methylglutaryl group tethered to PksL to a 3-methylglutaconyl moiety. This is Bacillaene synthase dehydratase PksH (pksH) from Bacillus subtilis (strain 168).